Reading from the N-terminus, the 361-residue chain is GTPase Obg (361 aa).

Residues 1-159 (MKFVDEAFID…KNLKLELKVL (159 aa)) enclose the Obg domain. Positions 160-334 (ADVGLLGMPN…LIKTIYQHVK (175 aa)) constitute an OBG-type G domain. GTP is bound by residues 166 to 173 (GMPNAGKS), 191 to 195 (FTTLH), 213 to 216 (DLPG), 284 to 287 (NKLD), and 315 to 317 (SAL). Residues Ser-173 and Thr-193 each contribute to the Mg(2+) site. The segment at 339–361 (SEQPVEEVDPRFVPLPPESPETP) is disordered. The span at 351–361 (VPLPPESPETP) shows a compositional bias: pro residues.

It belongs to the TRAFAC class OBG-HflX-like GTPase superfamily. OBG GTPase family. Monomer. Mg(2+) serves as cofactor.

It localises to the cytoplasm. Its function is as follows. An essential GTPase which binds GTP, GDP and possibly (p)ppGpp with moderate affinity, with high nucleotide exchange rates and a fairly low GTP hydrolysis rate. Plays a role in control of the cell cycle, stress response, ribosome biogenesis and in those bacteria that undergo differentiation, in morphogenesis control. This Polaromonas sp. (strain JS666 / ATCC BAA-500) protein is GTPase Obg.